Consider the following 310-residue polypeptide: Oxygen-dependent coproporphyrinogen-III oxidase (310 aa).

Ser93 is a binding site for substrate. A divalent metal cation contacts are provided by His97 and His107. His107 functions as the Proton donor in the catalytic mechanism. A substrate-binding site is contributed by Asn109–Arg111. 2 residues coordinate a divalent metal cation: His146 and His176. Residues Tyr241 to Ser276 are important for dimerization. Gly259–Arg261 contributes to the substrate binding site.

This sequence belongs to the aerobic coproporphyrinogen-III oxidase family. As to quaternary structure, homodimer. Requires a divalent metal cation as cofactor.

It is found in the cytoplasm. It carries out the reaction coproporphyrinogen III + O2 + 2 H(+) = protoporphyrinogen IX + 2 CO2 + 2 H2O. It functions in the pathway porphyrin-containing compound metabolism; protoporphyrin-IX biosynthesis; protoporphyrinogen-IX from coproporphyrinogen-III (O2 route): step 1/1. Involved in the heme biosynthesis. Catalyzes the aerobic oxidative decarboxylation of propionate groups of rings A and B of coproporphyrinogen-III to yield the vinyl groups in protoporphyrinogen-IX. The protein is Oxygen-dependent coproporphyrinogen-III oxidase of Pseudomonas fluorescens (strain SBW25).